We begin with the raw amino-acid sequence, 288 residues long: Very-long-chain (3R)-3-hydroxyacyl-CoA dehydratase 1 (288 aa).

Positions methionine 1–arginine 59 are disordered. At methionine 1–tryptophan 75 the chain is on the cytoplasmic side. Residues leucine 76 to valine 95 form a helical membrane-spanning segment. At arginine 96–threonine 114 the chain is on the lumenal side. A helical transmembrane segment spans residues leucine 115–isoleucine 131. Over glycine 132–alanine 141 the chain is Cytoplasmic. A helical transmembrane segment spans residues glycine 142–isoleucine 159. The Lumenal segment spans residues lysine 160 to glutamate 165. Residues glutamate 166–isoleucine 180 traverse the membrane as a helical segment. Topologically, residues threonine 181–tyrosine 203 are cytoplasmic. A helical membrane pass occupies residues asparagine 204–isoleucine 221. Catalysis depends on residues tyrosine 210 and glutamate 217. Over tyrosine 222–phenylalanine 251 the chain is Lumenal. A glycan (N-linked (GlcNAc...) asparagine) is linked at asparagine 243. The helical transmembrane segment at leucine 252–histidine 269 threads the bilayer. The Cytoplasmic segment spans residues methionine 270–aspartate 288.

It belongs to the very long-chain fatty acids dehydratase HACD family. As to quaternary structure, may interact with enzymes of the ELO family (including ELOVL1); with those enzymes that mediate condensation, the first of the four steps of the reaction cycle responsible for fatty acids elongation, may be part of a larger fatty acids elongase complex. Interacts with TECR. In terms of processing, N-glycosylated. Expressed in heart.

The protein resides in the endoplasmic reticulum membrane. It catalyses the reaction a very-long-chain (3R)-3-hydroxyacyl-CoA = a very-long-chain (2E)-enoyl-CoA + H2O. The enzyme catalyses (3R)-hydroxyhexadecanoyl-CoA = (2E)-hexadecenoyl-CoA + H2O. It carries out the reaction (3R)-hydroxyoctadecanoyl-CoA = (2E)-octadecenoyl-CoA + H2O. The catalysed reaction is (3R)-hydroxyeicosanoyl-CoA = (2E)-eicosenoyl-CoA + H2O. It catalyses the reaction (3R)-hydroxydocosanoyl-CoA = (2E)-docosenoyl-CoA + H2O. The enzyme catalyses (3R)-hydroxytetracosanoyl-CoA = (2E)-tetracosenoyl-CoA + H2O. It carries out the reaction (3R)-hydroxyhexacosanoyl-CoA = (2E)-hexacosenoyl-CoA + H2O. Its pathway is lipid metabolism; fatty acid biosynthesis. Its function is as follows. Catalyzes the third of the four reactions of the long-chain fatty acids elongation cycle. This endoplasmic reticulum-bound enzymatic process, allows the addition of two carbons to the chain of long- and very long-chain fatty acids/VLCFAs per cycle. This enzyme catalyzes the dehydration of the 3-hydroxyacyl-CoA intermediate into trans-2,3-enoyl-CoA, within each cycle of fatty acid elongation. Thereby, it participates in the production of VLCFAs of different chain lengths that are involved in multiple biological processes as precursors of membrane lipids and lipid mediators. The sequence is that of Very-long-chain (3R)-3-hydroxyacyl-CoA dehydratase 1 (HACD1) from Ovis aries (Sheep).